Reading from the N-terminus, the 246-residue chain is ATP synthase subunit a (246 aa).

The propeptide at 1-3 is removed in mature form; sequence MFY. 7 helical membrane passes run 21–41, 56–76, 82–102, 113–133, 138–158, 184–204, and 206–226; these read LTFS…IIIF, WGVS…GQIG, YFPL…ISMI, VAVV…GLYL, FFAL…LVLI, LMLI…LGFV, and GIIP…IAII.

This sequence belongs to the ATPase A chain family. F-type ATPases have 2 components, CF(1) - the catalytic core - and CF(0) - the membrane proton channel. CF(1) has five subunits: alpha(3), beta(3), gamma(1), delta(1), epsilon(1). CF(0) has three main subunits: a, b and c.

It is found in the mitochondrion inner membrane. Mitochondrial membrane ATP synthase (F(1)F(0) ATP synthase or Complex V) produces ATP from ADP in the presence of a proton gradient across the membrane which is generated by electron transport complexes of the respiratory chain. F-type ATPases consist of two structural domains, F(1) - containing the extramembraneous catalytic core and F(0) - containing the membrane proton channel, linked together by a central stalk and a peripheral stalk. During catalysis, ATP synthesis in the catalytic domain of F(1) is coupled via a rotary mechanism of the central stalk subunits to proton translocation. Key component of the proton channel; it may play a direct role in the translocation of protons across the membrane. This chain is ATP synthase subunit a (ATP6), found in Candida parapsilosis (Yeast).